The following is a 349-amino-acid chain: DNA polymerase IV (349 aa).

Positions 4–185 (IIHIDCDCFY…LPVAKLHGVG (182 aa)) constitute a UmuC domain. Mg(2+)-binding residues include D8 and D103. E104 is a catalytic residue.

This sequence belongs to the DNA polymerase type-Y family. As to quaternary structure, monomer. Mg(2+) is required as a cofactor.

The protein localises to the cytoplasm. The enzyme catalyses DNA(n) + a 2'-deoxyribonucleoside 5'-triphosphate = DNA(n+1) + diphosphate. Poorly processive, error-prone DNA polymerase involved in untargeted mutagenesis. Copies undamaged DNA at stalled replication forks, which arise in vivo from mismatched or misaligned primer ends. These misaligned primers can be extended by PolIV. Exhibits no 3'-5' exonuclease (proofreading) activity. May be involved in translesional synthesis, in conjunction with the beta clamp from PolIII. The protein is DNA polymerase IV of Pseudomonas paraeruginosa (strain DSM 24068 / PA7) (Pseudomonas aeruginosa (strain PA7)).